Here is a 367-residue protein sequence, read N- to C-terminus: Chorismate synthase (367 aa).

NADP(+)-binding residues include Arg48 and Arg54. Residues 125 to 127 (RSS), 238 to 239 (NA), Gly278, 293 to 297 (KPTSS), and Arg319 each bind FMN.

Belongs to the chorismate synthase family. Homotetramer. Requires FMNH2 as cofactor.

The catalysed reaction is 5-O-(1-carboxyvinyl)-3-phosphoshikimate = chorismate + phosphate. The protein operates within metabolic intermediate biosynthesis; chorismate biosynthesis; chorismate from D-erythrose 4-phosphate and phosphoenolpyruvate: step 7/7. Catalyzes the anti-1,4-elimination of the C-3 phosphate and the C-6 proR hydrogen from 5-enolpyruvylshikimate-3-phosphate (EPSP) to yield chorismate, which is the branch point compound that serves as the starting substrate for the three terminal pathways of aromatic amino acid biosynthesis. This reaction introduces a second double bond into the aromatic ring system. The protein is Chorismate synthase of Stenotrophomonas maltophilia (strain K279a).